A 469-amino-acid polypeptide reads, in one-letter code: Melanopsin (469 aa).

At 1-71 (MDSPPGPTAP…VDVPDHAHYI (71 aa)) the chain is on the extracellular side. Asparagine 30 carries an N-linked (GlcNAc...) asparagine glycan. A helical membrane pass occupies residues 72-92 (LGTVILLVGLTGMLGNLTVIY). At 93-106 (TFCRSRSLRTPANM) the chain is on the cytoplasmic side. The helical transmembrane segment at 107–127 (LIINLAVSDFLMSFTQAPVFF) threads the bilayer. Topologically, residues 128 to 143 (ASSLYKKWLFGETGCE) are extracellular. The cysteines at positions 142 and 220 are disulfide-linked. The chain crosses the membrane as a helical span at residues 144–164 (FYAFCGAVLGITSMITLTAIA). The Cytoplasmic segment spans residues 165 to 187 (LDRYLVITRPLATIGMGSKRRTA). A helical membrane pass occupies residues 188-208 (LVLLGIWLYALAWSLPPFFGW). Residues 209 to 237 (SAYVPEGLLTSCSWDYVTFTPQVRAYTML) lie on the Extracellular side of the membrane. The chain crosses the membrane as a helical span at residues 238–258 (LFCFVFFLPLLVIIFCYISIF). The Cytoplasmic portion of the chain corresponds to 259–295 (RAIRETGRACEGWSESPQRRRQWHRLQSEWKMAKVAL). A helical transmembrane segment spans residues 296–316 (IVILLFVLSWAPYSTVALVAF). Residues 317-328 (AGYSHILTPYMS) lie on the Extracellular side of the membrane. Residues 329–349 (SVPAVIAKASAIHNPIVYAIT) form a helical membrane-spanning segment. Residue lysine 336 is modified to N6-(retinylidene)lysine. The Cytoplasmic segment spans residues 350 to 469 (HPKYRAAIAQ…SLDLGMQDAP (120 aa)). The interval 409–469 (GSESEVGWTD…SLDLGMQDAP (61 aa)) is disordered.

This sequence belongs to the G-protein coupled receptor 1 family. Opsin subfamily.

The protein localises to the cell membrane. Its subcellular location is the cell projection. It localises to the axon. The protein resides in the dendrite. It is found in the perikaryon. In terms of biological role, photoreceptor that binds cis-retinaldehydes. Contributes to pupillar reflex, photoentrainment and other non-image forming responses to light. May be involved in the optokinetic visual tracking response. May be involved in the regulation of retinal hyaloid vessel growth and regression. This chain is Melanopsin (OPN4), found in Phodopus sungorus (Striped hairy-footed hamster).